Reading from the N-terminus, the 100-residue chain is Aspartyl/glutamyl-tRNA(Asn/Gln) amidotransferase subunit C (100 aa).

The protein belongs to the GatC family. As to quaternary structure, heterotrimer of A, B and C subunits.

The enzyme catalyses L-glutamyl-tRNA(Gln) + L-glutamine + ATP + H2O = L-glutaminyl-tRNA(Gln) + L-glutamate + ADP + phosphate + H(+). The catalysed reaction is L-aspartyl-tRNA(Asn) + L-glutamine + ATP + H2O = L-asparaginyl-tRNA(Asn) + L-glutamate + ADP + phosphate + 2 H(+). Functionally, allows the formation of correctly charged Asn-tRNA(Asn) or Gln-tRNA(Gln) through the transamidation of misacylated Asp-tRNA(Asn) or Glu-tRNA(Gln) in organisms which lack either or both of asparaginyl-tRNA or glutaminyl-tRNA synthetases. The reaction takes place in the presence of glutamine and ATP through an activated phospho-Asp-tRNA(Asn) or phospho-Glu-tRNA(Gln). The polypeptide is Aspartyl/glutamyl-tRNA(Asn/Gln) amidotransferase subunit C (Streptococcus agalactiae serotype III (strain NEM316)).